Here is a 179-residue protein sequence, read N- to C-terminus: Negative modulator of initiation of replication (179 aa).

The segment at 86–87 (AV) is interaction with DNA.

Belongs to the SeqA family. Homodimer. Polymerizes to form helical filaments.

Its subcellular location is the cytoplasm. Functionally, negative regulator of replication initiation, which contributes to regulation of DNA replication and ensures that replication initiation occurs exactly once per chromosome per cell cycle. Binds to pairs of hemimethylated GATC sequences in the oriC region, thus preventing assembly of replication proteins and re-initiation at newly replicated origins. Repression is relieved when the region becomes fully methylated. This chain is Negative modulator of initiation of replication, found in Shewanella woodyi (strain ATCC 51908 / MS32).